The sequence spans 239 residues: Acidic leucine-rich nuclear phosphoprotein 32 family member B (239 aa).

4 LRR repeats span residues 16–40 (AADA…LTSE), 43–64 (SLEF…PKLP), 65–87 (KLKK…AERT), and 89–110 (NLTH…EPLK). Residues 123–165 (CEVTMLNNYRESVFELLPKLTFLDGFDADDQEAPDSDPEAEDL) form the LRRCT domain. Residues 149–215 (DADDQEAPDS…EEDEDDEDVP (67 aa)) show a composition bias toward acidic residues. The interval 149–239 (DADDQEAPDS…EEEEDDEDDE (91 aa)) is disordered. The segment covering 216–225 (QGEKRKRDLS) has biased composition (basic and acidic residues). The segment covering 226–239 (DEGEEEEEDDEDDE) has biased composition (acidic residues).

The protein belongs to the ANP32 family.

It is found in the nucleus. In terms of biological role, multifunctional protein working as a cell cycle progression factor as well as a cell survival factor. Required for the progression from the G1 to the S phase. Anti-apoptotic protein which functions as a caspase-3 inhibitor. Has no phosphatase 2A (PP2A) inhibitor activity. Exhibits histone chaperone properties, stimulating core histones to assemble into a nucleosome. The protein is Acidic leucine-rich nuclear phosphoprotein 32 family member B (anp32b) of Xenopus laevis (African clawed frog).